The following is a 167-amino-acid chain: MPGNRPHYGRWPQHDFTSLKKLRPQSVTSRIQPGSDVIVCAEMDEQWGYVGAKSRQRWLFYAYDSLRKTVVAHVFGERTMATLGRLMSLLSPFDVVIWMTDGWPLYESRLKGKLHVISKRYTQRIERHNLNLRQHLARLGRKSLSFSKSVELHDKVIGHYLNIKHYQ.

Belongs to the transposase 27 family.

Absolutely required for transposition of IS1. In Escherichia coli, this protein is Insertion element IS1 protein InsB (insB).